A 626-amino-acid polypeptide reads, in one-letter code: DNA primase (626 aa).

The CHC2-type zinc finger occupies 39–63 (CPFHGEKTPSFSVSPEKQIFHCFGC). One can recognise a Toprim domain in the interval 264–346 (EEITLMEGFM…DVFVLQLPAG (83 aa)). The Mg(2+) site is built by glutamate 270, aspartate 314, and aspartate 316.

Belongs to the DnaG primase family. In terms of assembly, monomer. Interacts with DnaB. Zn(2+) is required as a cofactor. Mg(2+) serves as cofactor.

The enzyme catalyses ssDNA + n NTP = ssDNA/pppN(pN)n-1 hybrid + (n-1) diphosphate.. Functionally, RNA polymerase that catalyzes the synthesis of short RNA molecules used as primers for DNA polymerase during DNA replication. The chain is DNA primase from Listeria innocua serovar 6a (strain ATCC BAA-680 / CLIP 11262).